Consider the following 356-residue polypeptide: Red-sensitive opsin-2 (356 aa).

Topologically, residues 1–48 (MAEWANAAFAARRRGDETTRDNAFSYTNSNNTRDPFEGPNYHIAPRWV) are extracellular. Asn-30 carries N-linked (GlcNAc...) asparagine glycosylation. Residues 49–73 (YNVATVWMFFVVVASTFTNGLVLVA) form a helical membrane-spanning segment. The Cytoplasmic portion of the chain corresponds to 74–85 (TAKFKKLRHPLN). The helical transmembrane segment at 86-111 (WILVNLAIADLGETLFASTISVINQV) threads the bilayer. Over 112 to 125 (FGYFILGHPMCIFE) the chain is Extracellular. Cys-122 and Cys-199 are joined by a disulfide. Residues 126-145 (GYTVSVCGIAGLWSLTVISW) form a helical membrane-spanning segment. At 146-164 (ERWVVVCKPFGNVKFDGKW) the chain is on the cytoplasmic side. Residues 165–188 (ASAGIIFSWVWAAVWCAPPIFGWS) form a helical membrane-spanning segment. Residues 189 to 214 (RYWPHGLKTSCGPDVFGGNEDPGVQS) lie on the Extracellular side of the membrane. A helical transmembrane segment spans residues 215-242 (YMLVLMITCCILPLAIIILCYIAVFLAI). At 243–264 (HAVAQQQKDSESTQKAEKEVSR) the chain is on the cytoplasmic side. The helical transmembrane segment at 265–288 (MVVVMILAFCLCWGPYTAFACFAA) threads the bilayer. At 289-296 (ANPGYAFH) the chain is on the extracellular side. The helical transmembrane segment at 297 to 321 (PLAAAMPAYFAKSATIYNPIIYVFM) threads the bilayer. Lys-308 is subject to N6-(retinylidene)lysine. Topologically, residues 322 to 356 (NRQFRVCIMQLFGKKVDDGSEVSTSKTEVSSVAPA) are cytoplasmic.

The protein belongs to the G-protein coupled receptor 1 family. Opsin subfamily. Phosphorylated on some or all of the serine and threonine residues present in the C-terminal region.

It localises to the membrane. Functionally, visual pigments are the light-absorbing molecules that mediate vision. They consist of an apoprotein, opsin, covalently linked to cis-retinal. The chain is Red-sensitive opsin-2 (opn1lw2) from Danio rerio (Zebrafish).